The chain runs to 78 residues: Sec-independent protein translocase protein TatA (78 aa).

Residues 1 to 21 form a helical membrane-spanning segment; it reads MGSLSIWHWIVVLAVVLLLFG. A disordered region spans residues 43–78; sequence LAEDDEPAKTPAAPPEAPRPLPHQTSSAAEAEKKPV. A compositionally biased stretch (pro residues) spans 54–63; sequence AAPPEAPRPL.

This sequence belongs to the TatA/E family. The Tat system comprises two distinct complexes: a TatABC complex, containing multiple copies of TatA, TatB and TatC subunits, and a separate TatA complex, containing only TatA subunits. Substrates initially bind to the TatABC complex, which probably triggers association of the separate TatA complex to form the active translocon.

It localises to the cell inner membrane. In terms of biological role, part of the twin-arginine translocation (Tat) system that transports large folded proteins containing a characteristic twin-arginine motif in their signal peptide across membranes. TatA could form the protein-conducting channel of the Tat system. This Xanthobacter autotrophicus (strain ATCC BAA-1158 / Py2) protein is Sec-independent protein translocase protein TatA.